Consider the following 72-residue polypeptide: Gene 42 protein (72 aa).

This is Gene 42 protein (42) from Mycobacterium phage L5 (Mycobacteriophage L5).